The primary structure comprises 3707 residues: CUB and sushi domain-containing protein 3 (3707 aa).

The span at 1–21 shows a compositional bias: basic and acidic residues; sequence MKGSRKGESRAKESKPREPGT. The segment at 1-22 is disordered; sequence MKGSRKGESRAKESKPREPGTR. At 1–42 the chain is on the cytoplasmic side; sequence MKGSRKGESRAKESKPREPGTRRCAKCGRLDFILKKKMGIKS. A helical membrane pass occupies residues 43–63; the sequence is GFTFWNLVFLLTLSCVKGFIY. Topologically, residues 64 to 3630 are extracellular; it reads TCGGTLKGLN…NQPHGTNSSS (3567 aa). 4 disulfide bridges follow: cysteine 65/cysteine 91, cysteine 178/cysteine 218, cysteine 204/cysteine 235, and cysteine 241/cysteine 267. Positions 65–173 constitute a CUB 1 domain; it reads CGGTLKGLNG…HGFKVYYEEL (109 aa). N-linked (GlcNAc...) asparagine glycans are attached at residues asparagine 73 and asparagine 90. The Sushi 1 domain maps to 176–237; the sequence is SSCGNPGVPP…WDFPVPICRA (62 aa). The CUB 2 domain occupies 241-345; the sequence is CGGTMRGSSG…RGFSAPYQGS (105 aa). A disordered region spans residues 388–437; sequence HRLSEEQRVQVRSLSDSGLDPNTPEDQLSPHQADTQSTSRRPRNAEQIER. Over residues 411 to 426 the composition is skewed to polar residues; sequence PEDQLSPHQADTQSTS. The 62-residue stretch at 484–545 folds into the Sushi 2 domain; sequence NLCPDPGEPE…WSDHRPVCKV (62 aa). Intrachain disulfides connect cysteine 486/cysteine 526, cysteine 512/cysteine 543, cysteine 548/cysteine 574, cysteine 664/cysteine 704, cysteine 690/cysteine 717, and cysteine 721/cysteine 747. The region spanning 548–659 is the CUB 3 domain; it reads CGSNLQGPSG…VGFKVNYKEI (112 aa). The 58-residue stretch at 662 to 719 folds into the Sushi 3 domain; the sequence is ESCGDPGTPLYGIREGDGFSNRDVLRFECQFGFELIGEKSIVCQENNQWSANIPICIF. Residues 721–829 enclose the CUB 4 domain; the sequence is CLSNFTAPMG…RGFNITYNTF (109 aa). Residues asparagine 724 and asparagine 823 are each glycosylated (N-linked (GlcNAc...) asparagine). The Sushi 4 domain occupies 832-893; that stretch reads NECPDPGIPI…WSGPIPRCGA (62 aa). 3 disulfides stabilise this stretch: cysteine 834–cysteine 875, cysteine 860–cysteine 891, and cysteine 895–cysteine 921. Positions 895 to 1003 constitute a CUB 5 domain; it reads CGGHFSAPSG…NGFKIHYESV (109 aa). Residue asparagine 966 is glycosylated (N-linked (GlcNAc...) asparagine). The Sushi 5 domain occupies 1008 to 1065; the sequence is YSCLDPGIPVHGRRYGHDFSIGSTVSFSCDPGYRLSHEEPLLCEKNHWWSHPLPTCDA. Intrachain disulfides connect cysteine 1010–cysteine 1050, cysteine 1036–cysteine 1063, and cysteine 1067–cysteine 1093. The CUB 6 domain occupies 1067–1177; that stretch reads CGGDVRGPSG…EGFNITFSEY (111 aa). N-linked (GlcNAc...) asparagine glycans are attached at residues asparagine 1092, asparagine 1126, and asparagine 1171. The Sushi 6 domain occupies 1180–1239; it reads EPCEDPGIPQYGSRVGFSFGVGDTLTFSCSLGYRLEGSSEIICLGGGRRVWSAPLPRCVA. 3 disulfide bridges follow: cysteine 1182/cysteine 1222, cysteine 1208/cysteine 1237, and cysteine 1241/cysteine 1267. The CUB 7 domain maps to 1241–1349; that stretch reads CGASATNNEG…EGFQLVYTSF (109 aa). N-linked (GlcNAc...) asparagine glycosylation occurs at asparagine 1280. The region spanning 1352-1412 is the Sushi 7 domain; the sequence is SHCEDPGIPQ…WDYPLPSCIA (61 aa). 12 cysteine pairs are disulfide-bonded: cysteine 1354–cysteine 1395, cysteine 1381–cysteine 1410, cysteine 1414–cysteine 1441, cysteine 1528–cysteine 1568, cysteine 1554–cysteine 1584, cysteine 1588–cysteine 1614, cysteine 1701–cysteine 1741, cysteine 1727–cysteine 1758, cysteine 1762–cysteine 1788, cysteine 1878–cysteine 1918, cysteine 1904–cysteine 1935, and cysteine 1939–cysteine 1965. Residues 1414 to 1523 form the CUB 8 domain; the sequence is CGGRFKGESS…SGFAIQFSSS (110 aa). One can recognise a Sushi 8 domain in the interval 1526 to 1586; the sequence is TACRDPGVPM…WQPSPPVCIA (61 aa). N-linked (GlcNAc...) asparagine glycosylation occurs at asparagine 1536. A CUB 9 domain is found at 1588-1696; that stretch reads CGGNLTGSSG…TGFHLEYKAK (109 aa). N-linked (GlcNAc...) asparagine glycosylation is found at asparagine 1591 and asparagine 1709. In terms of domain architecture, Sushi 9 spans 1699–1760; the sequence is ESCFDPGNIM…WNRVLPSCHA (62 aa). One can recognise a CUB 10 domain in the interval 1762-1870; it reads CGSRSTGSEG…KGFHFVYQAV (109 aa). Asparagine 1781 carries an N-linked (GlcNAc...) asparagine glycan. The 62-residue stretch at 1876–1937 folds into the Sushi 10 domain; it reads TQCSSVPEPR…WNDSLPTCIV (62 aa). Asparagine 1929 carries an N-linked (GlcNAc...) asparagine glycan. The 109-residue stretch at 1939–2047 folds into the CUB 11 domain; sequence CGGILTKRKG…AGFHLEYTAI (109 aa). The N-linked (GlcNAc...) asparagine glycan is linked to asparagine 2019. The Sushi 11 domain occupies 2050 to 2109; the sequence is DSCPEPQTPSSGIKVGDRYMVGDVVSFQCDQGYSLQGHSHITCMPGPVRRWNYPIPICLA. Disulfide bonds link cysteine 2052/cysteine 2092, cysteine 2078/cysteine 2107, and cysteine 2111/cysteine 2137. Residues 2111 to 2219 form the CUB 12 domain; the sequence is CGGAMSDFSG…QGFHIVYQAY (109 aa). Asparagine 2155 is a glycosylation site (N-linked (GlcNAc...) asparagine). One can recognise a Sushi 12 domain in the interval 2222 to 2281; the sequence is QSCPDPRPFRNGFVIGNDFTVGQTISFECFPGYTLIGNSALTCLHGVSRNWNHPLPRCEA. 36 cysteine pairs are disulfide-bonded: cysteine 2224-cysteine 2264, cysteine 2250-cysteine 2279, cysteine 2283-cysteine 2309, cysteine 2395-cysteine 2437, cysteine 2423-cysteine 2452, cysteine 2456-cysteine 2484, cysteine 2569-cysteine 2610, cysteine 2596-cysteine 2627, cysteine 2632-cysteine 2674, cysteine 2658-cysteine 2689, cysteine 2694-cysteine 2739, cysteine 2725-cysteine 2754, cysteine 2759-cysteine 2799, cysteine 2785-cysteine 2812, cysteine 2817-cysteine 2857, cysteine 2843-cysteine 2870, cysteine 2875-cysteine 2915, cysteine 2901-cysteine 2928, cysteine 2933-cysteine 2977, cysteine 2963-cysteine 2990, cysteine 2995-cysteine 3035, cysteine 3021-cysteine 3048, cysteine 3056-cysteine 3096, cysteine 3082-cysteine 3109, cysteine 3114-cysteine 3155, cysteine 3141-cysteine 3168, cysteine 3173-cysteine 3215, cysteine 3199-cysteine 3228, cysteine 3233-cysteine 3273, cysteine 3259-cysteine 3286, cysteine 3291-cysteine 3331, cysteine 3317-cysteine 3344, cysteine 3352-cysteine 3393, cysteine 3379-cysteine 3406, cysteine 3411-cysteine 3453, and cysteine 3438-cysteine 3466. The CUB 13 domain occupies 2283–2394; the sequence is CGGNITAMNG…LSYHAYQLRV (112 aa). 2 N-linked (GlcNAc...) asparagine glycosylation sites follow: asparagine 2286 and asparagine 2291. Residues 2393 to 2454 form the Sushi 13 domain; that stretch reads RVCQPPPPVP…MDGAPPVCQV (62 aa). A CUB 14 domain is found at 2456–2567; the sequence is CPANELRLDS…KGFRIRYIAF (112 aa). Sushi domains follow at residues 2567–2629, 2630–2691, 2692–2756, 2757–2814, 2815–2872, 2873–2930, 2931–2992, 2993–3050, 3054–3111, 3112–3170, 3171–3230, 3231–3288, 3289–3346, 3350–3408, and 3409–3468; these read FYCS…ACQA, ISCG…RCVV, VTCP…YCQI, ISCG…RCLA, GHCG…SCVP, VSCG…VCKV, VNCS…ECIM, IDCG…HCSG, GTCG…ECKA, VQCG…NCTI, ISCG…TCRA, VTCS…QCLP, KFCG…HCIE, TSCE…ECIP, and HSCK…VCEA. A compositionally biased stretch (low complexity) spans 3052–3065; the sequence is TTGTCGDPGTPGHG. The disordered stretch occupies residues 3052-3071; that stretch reads TTGTCGDPGTPGHGSRQESD. The helical transmembrane segment at 3631–3651 threads the bilayer; that stretch reads VAIAILVPFFALIFAGFGFYL. The Cytoplasmic segment spans residues 3652 to 3707; that stretch reads YKQRTAPKTQYTGCSVHENNNGQAAFENPMYDTNAKSVEGKAVRFDPNLNTVCTMV.

The protein belongs to the CSMD family. In terms of tissue distribution, expressed in the apical dendrites of postnatal hippocampal neurons (at protein level).

It localises to the cell membrane. Its function is as follows. Involved in dendrite development. The protein is CUB and sushi domain-containing protein 3 (Csmd3) of Mus musculus (Mouse).